A 259-amino-acid chain; its full sequence is MPEARDRIERQVDYPAAFLNRRSHGILLDEPATQHNLFGSPVQRVPSEATGGLGSIGQGSMTGRGGLVRGNFGIRRTGGGRRGQIQFRSPQGRENMSLGVTRRGRARASNSVLPSWYPRTPLRDISAVVRAIERRRARMGEGVGRDIETPTPQQLGVLDSLVPLSGAHLEHDYSMVTPGPSIGFKRPWPPSTAKVHQILLDITRENTGEEDALTPEKKLLNSIDKVEKVVMEEIQKMKSTPSAKRAEREKRVRTLMSMR.

Positions 236–259 are disordered; that stretch reads KMKSTPSAKRAEREKRVRTLMSMR.

In terms of assembly, interacts with APC/C activators such as APC5, FZR2, FZR3, CDC20.1 and CDC20.5. In terms of tissue distribution, expressed mainly in actively dividing cells (e.g. central cylinder of the root tip, young leaves and vascular tissues).

It is found in the nucleus. In terms of biological role, negative regulator of the anaphase-promoting complex/cyclosome (APC/C) ubiquitin ligase required for proper mitotic progression and cell fate determination; inhibits premature cell differentiation. Prevents DNA endoreplication by promoting the maintenance of the mitotic state by preferentially inhibiting APC/C(FZR) and triggering cyclins accumulation (e.g. CYCB1-1, CYCB1-2 and CYCA2-3) in a temporal manner. Required for megagametophyte and endosperm development. Counteracts the activity of CCS52A1 thus inhibiting the turnover of CYCA2-3. Confers immunity to bacterial pathogens (e.g. Pseudomonas syringae pv. tomato DC3000), which is associated with increased expression of disease resistance (R) genes. This chain is Protein POLYCHOME (PYM), found in Arabidopsis thaliana (Mouse-ear cress).